A 1273-amino-acid polypeptide reads, in one-letter code: DNA-directed RNA polymerase subunit beta (1273 aa).

The segment at 1252–1273 is disordered; that stretch reads ADDQDLVVSSNDEEVSENDERS.

Belongs to the RNA polymerase beta chain family. In terms of assembly, the RNAP catalytic core consists of 2 alpha, 1 beta, 1 beta' and 1 omega subunit. When a sigma factor is associated with the core the holoenzyme is formed, which can initiate transcription.

It carries out the reaction RNA(n) + a ribonucleoside 5'-triphosphate = RNA(n+1) + diphosphate. DNA-dependent RNA polymerase catalyzes the transcription of DNA into RNA using the four ribonucleoside triphosphates as substrates. The protein is DNA-directed RNA polymerase subunit beta of Dehalococcoides mccartyi (strain CBDB1).